The sequence spans 196 residues: Peptidyl-tRNA hydrolase (196 aa).

Residue tyrosine 18 coordinates tRNA. The active-site Proton acceptor is the histidine 23. TRNA is bound by residues phenylalanine 69, asparagine 71, and asparagine 117.

This sequence belongs to the PTH family. In terms of assembly, monomer.

The protein localises to the cytoplasm. The catalysed reaction is an N-acyl-L-alpha-aminoacyl-tRNA + H2O = an N-acyl-L-amino acid + a tRNA + H(+). Functionally, hydrolyzes ribosome-free peptidyl-tRNAs (with 1 or more amino acids incorporated), which drop off the ribosome during protein synthesis, or as a result of ribosome stalling. Catalyzes the release of premature peptidyl moieties from peptidyl-tRNA molecules trapped in stalled 50S ribosomal subunits, and thus maintains levels of free tRNAs and 50S ribosomes. The polypeptide is Peptidyl-tRNA hydrolase (Aliivibrio salmonicida (strain LFI1238) (Vibrio salmonicida (strain LFI1238))).